We begin with the raw amino-acid sequence, 429 residues long: Trigger factor (429 aa).

A PPIase FKBP-type domain is found at 164–249 (GDTAVIDFEG…VKEVKTKVLP (86 aa)).

This sequence belongs to the FKBP-type PPIase family. Tig subfamily.

Its subcellular location is the cytoplasm. The enzyme catalyses [protein]-peptidylproline (omega=180) = [protein]-peptidylproline (omega=0). Its function is as follows. Involved in protein export. Acts as a chaperone by maintaining the newly synthesized protein in an open conformation. Functions as a peptidyl-prolyl cis-trans isomerase. The polypeptide is Trigger factor (Lysinibacillus sphaericus (strain C3-41)).